We begin with the raw amino-acid sequence, 623 residues long: Lethal(3)malignant brain tumor-like protein 4 (623 aa).

The interval 1 to 44 (MKQPNRKRKLNMDSKERLDQDGRLEQAEEEKKPKDSTTPLSHVP) is disordered. The segment covering 10–35 (LNMDSKERLDQDGRLEQAEEEKKPKD) has biased composition (basic and acidic residues). MBT repeat units follow at residues 52–152 (WSWE…LHIP), 160–260 (FVWM…LIAP), and 269–364 (FSWT…LEVP). The CCHHC-type zinc finger occupies 370-414 (LKILPGQAVCPTPGCRGIGHIRGPRYSGHHSAFGCPYSDMNLKKE). Zn(2+)-binding residues include C379, C384, H398, and C404. Residues 543–607 (WTVDEVAEFV…YNSILMFRHS (65 aa)) form the SAM domain.

It localises to the nucleus. In terms of biological role, putative Polycomb group (PcG) protein. PcG proteins maintain the transcriptionally repressive state of genes, probably via a modification of chromatin, rendering it heritably changed in its expressibility. The polypeptide is Lethal(3)malignant brain tumor-like protein 4 (L3MBTL4) (Homo sapiens (Human)).